The primary structure comprises 465 residues: Probable protein phosphatase 2C 71 (465 aa).

Disordered regions lie at residues 14-47 (RPCK…ACRA), 68-119 (RPRD…GEVT), and 133-191 (SGGA…PAEE). Pro residues predominate over residues 18–30 (LAPPPPPPLPVSP). Low complexity-rich tracts occupy residues 84–106 (AVAP…AAAE) and 133–143 (SGGAEATATSG). The PPM-type phosphatase domain occupies 222 to 460 (ASGAAILPHP…DDIAVVVSIV (239 aa)). Positions 254, 255, 384, and 451 each coordinate Mn(2+).

Belongs to the PP2C family. Requires Mg(2+) as cofactor. It depends on Mn(2+) as a cofactor.

The enzyme catalyses O-phospho-L-seryl-[protein] + H2O = L-seryl-[protein] + phosphate. It carries out the reaction O-phospho-L-threonyl-[protein] + H2O = L-threonyl-[protein] + phosphate. The protein is Probable protein phosphatase 2C 71 of Oryza sativa subsp. japonica (Rice).